Reading from the N-terminus, the 293-residue chain is Phosphatidate cytidylyltransferase (293 aa).

Transmembrane regions (helical) follow at residues 6–26 (IISA…GGWY), 51–71 (IAPA…SATV), 73–93 (PHLT…YLLF), 97–117 (MATI…GYLP), 157–177 (LLVT…AYIM), 195–215 (VEGS…GAWY), 218–238 (WPYW…VSLL), and 273–293 (VFTA…LNNL).

It belongs to the CDS family.

The protein localises to the cell membrane. The catalysed reaction is a 1,2-diacyl-sn-glycero-3-phosphate + CTP + H(+) = a CDP-1,2-diacyl-sn-glycerol + diphosphate. The protein operates within phospholipid metabolism; CDP-diacylglycerol biosynthesis; CDP-diacylglycerol from sn-glycerol 3-phosphate: step 3/3. In Synechocystis sp. (strain ATCC 27184 / PCC 6803 / Kazusa), this protein is Phosphatidate cytidylyltransferase (cdsA).